The following is a 356-amino-acid chain: 5-formaminoimidazole-4-carboxamide-1-(beta)-D-ribofuranosyl 5'-monophosphate synthetase 1 (356 aa).

2 residues coordinate 5-amino-1-(5-phospho-beta-D-ribosyl)imidazole-4-carboxamide: His27 and Ser94. Residues 101-333 (TENFAEMAVP…YADLIQEDLS (233 aa)) enclose the ATP-grasp domain. ATP contacts are provided by residues 145–196 (PRDI…TRYY) and Glu226. Residue Asn255 coordinates 5-amino-1-(5-phospho-beta-D-ribosyl)imidazole-4-carboxamide. Residues Glu293 and Glu306 each contribute to the Mg(2+) site.

It belongs to the phosphohexose mutase family. Mg(2+) is required as a cofactor. Mn(2+) serves as cofactor.

The enzyme catalyses 5-amino-1-(5-phospho-beta-D-ribosyl)imidazole-4-carboxamide + formate + ATP = 5-formamido-1-(5-phospho-D-ribosyl)imidazole-4-carboxamide + ADP + phosphate. It participates in purine metabolism; IMP biosynthesis via de novo pathway; 5-formamido-1-(5-phospho-D-ribosyl)imidazole-4-carboxamide from 5-amino-1-(5-phospho-D-ribosyl)imidazole-4-carboxamide (formate route): step 1/1. Catalyzes the ATP- and formate-dependent formylation of 5-aminoimidazole-4-carboxamide-1-beta-d-ribofuranosyl 5'-monophosphate (AICAR) to 5-formaminoimidazole-4-carboxamide-1-beta-d-ribofuranosyl 5'-monophosphate (FAICAR) in the absence of folates. This chain is 5-formaminoimidazole-4-carboxamide-1-(beta)-D-ribofuranosyl 5'-monophosphate synthetase 1, found in Methanosarcina mazei (strain ATCC BAA-159 / DSM 3647 / Goe1 / Go1 / JCM 11833 / OCM 88) (Methanosarcina frisia).